The chain runs to 387 residues: MSSLPRNAVARNSKMHKKRDSGVKLSRNINTLDAVCKKHAVGNLIFRNCKMASYEGRVSFVDHEETRGNMRSGVIVVKATSIYSSEDIYDVVKVREDKIARDLKKRQEDYEKTKLEVERLKRSEELANKLANNDPKHDQLVEKLNENNTVEPNNESTEESVEQITEQTVEQTTEQTVEESVEQTTEKTTQQTAEESVEQSTEQTVEKSGDQSTEKTTQQTAEESVEQSTEQPIEESNKNTNQNNDNKKKKKEKNKYYRNFMKDIKSKFSLKLRPENNYFEVKAETTDMIIEHSVVYEIVMVPPTKETYLLVIGDLQMKSSYLRQIDPQYKMDAVLKEQTEFMERIKAKEQLKIHQSPNNKLEPEDMILDDGTSTLTEIEYLGLEEES.

Positions 1-23 (MSSLPRNAVARNSKMHKKRDSGV) are disordered. The stretch at 98–129 (KIARDLKKRQEDYEKTKLEVERLKRSEELANK) forms a coiled coil. Positions 146 to 255 (ENNTVEPNNE…NKKKKKEKNK (110 aa)) are disordered. Composition is skewed to low complexity over residues 162-175 (EQIT…TTEQ) and 182-194 (EQTT…QTAE). A compositionally biased stretch (basic and acidic residues) spans 204 to 213 (TVEKSGDQST). The span at 214 to 231 (EKTTQQTAEESVEQSTEQ) shows a compositional bias: polar residues.

This is an uncharacterized protein from Acanthamoeba polyphaga mimivirus (APMV).